A 549-amino-acid chain; its full sequence is DDB1- and CUL4-associated factor 11 (549 aa).

A compositionally biased stretch (low complexity) spans 1–24 (MGSRNSSSAGSGSLEPSEGLSRRG). Residues 1–40 (MGSRNSSSAGSGSLEPSEGLSRRGAGLRRSEEEEEEDEDV) are disordered. Phosphoserine occurs at positions 73 and 75. Residues 80 to 89 (DSAWDGRLGD) show a composition bias toward basic and acidic residues. Positions 80–100 (DSAWDGRLGDRYNPPVDATPD) are disordered. 7 WD repeats span residues 170–210 (TYSQ…HKFK), 216–258 (DVGW…TALD), 263–302 (ERRF…RTLQ), 305–345 (SHED…EDDP), 353–392 (GHQD…SREG), 435–480 (GVLH…KKLT), and 481–520 (NHKA…YFQD).

Interacts with DDB1 and CUL4A.

The protein operates within protein modification; protein ubiquitination. May function as a substrate receptor for CUL4-DDB1 E3 ubiquitin-protein ligase complex. This chain is DDB1- and CUL4-associated factor 11 (Dcaf11), found in Rattus norvegicus (Rat).